A 282-amino-acid polypeptide reads, in one-letter code: MHYGLVLFTSDRGITPAAAARLAESHGFRTFYVPEHTHIPVKRQAAHPTTGDASLPDDRYMRTLDPWVSLGAASAVTSRIRLATAVALPVEHDPITLAKSIATLDHLSHGRVSVGVGFGWNTDELVDHGVPPGRRRTMLREYLEAMRALWTQEEACYDGEFVKFGPSWAWPKPVQPHIPVLVGAAGTEKNFKWIARSADGWITTPRDVDIDEPVKLLQDIWAAAGRDGLPQIVALDVKPVPDKLARWAELGVTEVLFGMPDRSADDAAAYVERLAAKLACCV.

The protein to M.tuberculosis Rv2161c and Rv3079c.

This is an uncharacterized protein from Mycobacterium tuberculosis (strain CDC 1551 / Oshkosh).